The chain runs to 228 residues: Ran-binding protein 1 homolog a (228 aa).

Residues methionine 1–glutamate 13 show a composition bias toward basic and acidic residues. Disordered stretches follow at residues methionine 1–proline 30 and serine 159–threonine 228. Residues glutamate 14–threonine 24 are compositionally biased toward acidic residues. A RanBD1 domain is found at glutamine 27–glutamate 162. Positions leucine 179–threonine 228 are enriched in basic and acidic residues.

As to quaternary structure, interacts with the GTP-bound form of RAN1, RAN2 and RAN3. As to expression, ubiquitous. Preferentially expressed in root tips and gynoecium.

Its subcellular location is the nucleus. The protein resides in the nuclear pore complex. This Arabidopsis thaliana (Mouse-ear cress) protein is Ran-binding protein 1 homolog a (RANBP1A).